The sequence spans 197 residues: C-type lectin domain family 3 member A (197 aa).

An N-terminal signal peptide occupies residues 1–24 (MAKNGLVIYILVITLLLDQTSCHA). 3 cysteine pairs are disulfide-bonded: cysteine 68/cysteine 78, cysteine 95/cysteine 191, and cysteine 167/cysteine 183. Positions 74-192 (FHKKCYLAAE…CHSSKRYICE (119 aa)) constitute a C-type lectin domain.

It localises to the secreted. Its function is as follows. Promotes cell adhesion to laminin and fibronectin. This is C-type lectin domain family 3 member A (CLEC3A) from Bos taurus (Bovine).